We begin with the raw amino-acid sequence, 299 residues long: MANFPASLLILNGKSADNQPLREAITLLRDEGIQIHVRVTWEKGDAQRYVDEARRLGVETVIAGGGDGTINEVSTALIQIRDGVAPALGLLPLGTANDFATSAGIPEALDKALKLAIAGNAMEIDMARVNDKTCFINMATGGFGTRITTETPEKLKAALGGVSYLIHGLMRMDTLTPDRCEICGENFHWQGDALVIGIGNGRQAGGGQQLCPTALINDGLLQLRIFTGEELLPALFSTLTQSDDNPNIIDGASAWFDIHAPHEITFNLDGEPLSGQEFHIEVLPGALRCRLPPDCPLLR.

The DAGKc domain maps to 2 to 133 (ANFPASLLIL…IDMARVNDKT (132 aa)). ATP is bound by residues Thr40, 66–72 (GDGTINE), and Thr95. Residues Leu215, Asp218, and Leu220 each coordinate Mg(2+). The active-site Proton acceptor is the Glu271.

The protein belongs to the diacylglycerol/lipid kinase family. YegS lipid kinase subfamily. It depends on Mg(2+) as a cofactor. The cofactor is Ca(2+).

It localises to the cytoplasm. Its function is as follows. Probably phosphorylates lipids; the in vivo substrate is unknown. The sequence is that of Probable lipid kinase YegS from Salmonella heidelberg (strain SL476).